The following is a 688-amino-acid chain: MSGPNRTYSFGEGDDSLAHPSSRTHAMHSQYDDVSPISDGARMNPMNGQGMDHGLASVLEDGRQGWGRSPEPSPSLLTGSSATPGMDNLGPGAVGGGISGIALSVANSHDRLSGVEALMGTDGQEANIPAERGLSTTGSDNPYVPEPPEHRYSYGSNIALGAAAAPAGQLTPGQSVSHLSSTNPSQRNLYDIPYQDVGGLNAGPYQRHSAYSSNDLPVDINPDEIVDDGDDGFVPAPNSGSGARKSQAIPAAAGGAAAGGVLGNLGGLFGGKSAADTSYGPVPGAGLEAGEKGRWVKPKPGGGNKKRGWIVGAILAFIIIGAIVGGAVGGTIGHRGNEEPSSASSASSSSTQTATEDTSVNGDLDKNSAEIKALMNNKNLHKVFPGIDYTPWGVQYPLCLKYPPSQNNVTRDMAVLTQLTNNVRLYGTDCNQTEMVLHAIDKLEIKDMKIWLGVWIDSNETTSRRQIDQLYKIIDDAKDISIFNGAIVGNEALYRAGSDKTSAQTTLINYMQEVKDHFKKKNIDLPVATSDLGDNWDATLVQAADVVMANVHPFFGGIPVDQAAAWTWRFWQDHNVALTKGTNKKQIISEVGWPSGGGNDCGQGANCPNDTAGAVAGVDELNKFMEDWVCQALDNGTDYFWFEAFDEPWKIVYNTGKENWEDKWGLMDSARNLKPGLKIPDCGGKTAT.

Disordered stretches follow at residues 1 to 91, 126 to 148, and 168 to 195; these read MSGP…NLGP, ANIP…PEPP, and GQLT…IPYQ. At 1-307 the chain is on the cytoplasmic side; it reads MSGPNRTYSF…PKPGGGNKKR (307 aa). The segment covering 175–188 has biased composition (polar residues); that stretch reads SVSHLSSTNPSQRN. Residues 308-328 traverse the membrane as a helical; Signal-anchor for type II membrane protein segment; that stretch reads GWIVGAILAFIIIGAIVGGAV. Topologically, residues 329–688 are extracellular; that stretch reads GGTIGHRGNE…IPDCGGKTAT (360 aa). The segment at 334–363 is disordered; it reads HRGNEEPSSASSASSSSTQTATEDTSVNGD. The segment covering 341–355 has biased composition (low complexity); it reads SSASSASSSSTQTAT. Residues Asn-408, Asn-431, and Asn-459 are each glycosylated (N-linked (GlcNAc...) asparagine). Glu-491 (proton donor) is an active-site residue. Catalysis depends on Glu-590, which acts as the Nucleophile. Residues Asn-609 and Asn-635 are each glycosylated (N-linked (GlcNAc...) asparagine).

The protein belongs to the glycosyl hydrolase 17 family.

It localises to the cell membrane. The enzyme catalyses Hydrolysis of (1-&gt;3)-beta-D-glucosidic linkages in (1-&gt;3)-beta-D-glucans.. Its function is as follows. Glucanases play a role in cell expansion during growth, in cell-cell fusion during mating, and in spore release during sporulation. This enzyme may be involved in beta-glucan degradation. Active on laminarin and lichenan. This is Probable glucan endo-1,3-beta-glucosidase btgC (btgC) from Aspergillus fumigatus (strain ATCC MYA-4609 / CBS 101355 / FGSC A1100 / Af293) (Neosartorya fumigata).